The chain runs to 375 residues: Thioredoxin reductase 1, mitochondrial (375 aa).

Residues 1 to 37 (MNCVSRLKCLISKARSFARLGGESTLSQPPSLASAAF) constitute a mitochondrion transit peptide. FAD is bound by residues 58–61 (SGPA), 79–80 (FE), 87–92 (IAPGGQ), N101, V134, C192, D337, and 344–346 (RQA). C189 and C192 form a disulfide bridge.

The protein belongs to the class-II pyridine nucleotide-disulfide oxidoreductase family. As to quaternary structure, homodimer. Requires FAD as cofactor. As to expression, ubiquitous.

It is found in the cytoplasm. Its subcellular location is the mitochondrion. The enzyme catalyses [thioredoxin]-dithiol + NADP(+) = [thioredoxin]-disulfide + NADPH + H(+). Functionally, NADPH-dependent thioredoxin-disulfide reductase that reduces thioredoxins O1, O2 and F3. This Arabidopsis thaliana (Mouse-ear cress) protein is Thioredoxin reductase 1, mitochondrial (NTR1).